The primary structure comprises 103 residues: Large ribosomal subunit protein uL24 (103 aa).

The protein belongs to the universal ribosomal protein uL24 family. As to quaternary structure, part of the 50S ribosomal subunit.

In terms of biological role, one of two assembly initiator proteins, it binds directly to the 5'-end of the 23S rRNA, where it nucleates assembly of the 50S subunit. One of the proteins that surrounds the polypeptide exit tunnel on the outside of the subunit. The chain is Large ribosomal subunit protein uL24 from Histophilus somni (strain 129Pt) (Haemophilus somnus).